The chain runs to 165 residues: Protein SprT (165 aa).

The SprT-like domain occupies 22 to 163 (LAQANLKLDR…RCVHCGEPLV (142 aa)). His-78 contributes to the Zn(2+) binding site. Glu-79 is an active-site residue. His-82 lines the Zn(2+) pocket.

It belongs to the SprT family. The cofactor is Zn(2+).

Its subcellular location is the cytoplasm. This is Protein SprT from Salmonella paratyphi C (strain RKS4594).